We begin with the raw amino-acid sequence, 395 residues long: GPI-anchor transamidase (395 aa).

An N-terminal signal peptide occupies residues 1–27 (MAAPCFLTLRVATLAALALLSLGSSAA). Residues 28 to 368 (GHIEDQAEQF…PKPRDWHPPG (341 aa)) are Lumenal-facing. Positions 79, 82, 118, and 120 each coordinate Ca(2+). His164 acts as the Proton donor in catalysis. Cys206 acts as the Nucleophile; acyl-thioester intermediate in catalysis. Residues Cys206, Ser232, and Ser234 each coordinate a protein. Positions 231-236 (DSLSHQ) are autoinhibitory loop. Residues Cys275 and Cys280 are joined by a disulfide bond. The chain crosses the membrane as a helical span at residues 369 to 385 (GFILGLWALIIMVFFKT). The Cytoplasmic segment spans residues 386 to 395 (YGIKHMKFIF).

Belongs to the peptidase C13 family. As to quaternary structure, heteropentamer. Part of the GPI-anchor transamidase complex, consisting of PIGK, PIGT, PIGS, PIGU and GAA1. Interacts with GPAA1. Interacts with PIGT; this interaction, via a disulfide link, stabilizes the expression of GAA1 and PIGK and links them to PIGS. In terms of processing, the disulfide bond between PIGK/GPI8 and PIGT is important for normal enzyme activity.

The protein resides in the endoplasmic reticulum membrane. It functions in the pathway glycolipid biosynthesis; glycosylphosphatidylinositol-anchor biosynthesis. In the absence of proproteins substrates, exists in an inactive state with a disrupted catalytic site by an autoinhibitory loop. The binding of proprotein substrates, particularly the CSP region, to GPI-T triggers concerted conformational changes that alleviate the inhibition by the autoinhibitory loop. Meanwhile, proprotein residues near the omega- site induce the formation of a catalytic cleft for catalysis, following which the products are released and GPI-T reverts to the inactive state. Catalytic subunit of the glycosylphosphatidylinositol-anchor (GPI-anchor) transamidase (GPI-T) complex that catalyzes the formation of the linkage between a proprotein and a GPI-anchor and participates in GPI anchored protein biosynthesis. Recognizes diverse proproteins at a C-terminal signal peptide (CSP) region that lacks consensus sequence and replaces it with a GPI-anchor via a transamidation reaction. Transamidation catalysis reaction follows a two-phase mechanism. In the acyl-enzyme phase, the carbonyl group of the proproteins's omega-site undergoes a nucleophilic attack forming an enzyme-substrate thioester bond. Followed by a general acid catalysis that allows CSP releasing, regenerating the carbonyl, and forming the acyl-enzyme intermediate. In the GPI-anchor attachment phase, the amino group of the GPI-anchor's ethanolamine phosphate, the one on third mannose (EtNP3), mediates a nucleophilic attack on the carbonyl of the acyl-enzyme intermediate, replacing the CSP, allowing GPI-anchor attachment to the omega-residue, therefore forming the product and freeing the enzyme. The sequence is that of GPI-anchor transamidase from Mus musculus (Mouse).